An 895-amino-acid polypeptide reads, in one-letter code: Alanine--tRNA ligase (895 aa).

Residues His586, His590, Cys690, and His694 each coordinate Zn(2+).

This sequence belongs to the class-II aminoacyl-tRNA synthetase family. Zn(2+) is required as a cofactor.

The protein resides in the cytoplasm. The catalysed reaction is tRNA(Ala) + L-alanine + ATP = L-alanyl-tRNA(Ala) + AMP + diphosphate. Catalyzes the attachment of alanine to tRNA(Ala) in a two-step reaction: alanine is first activated by ATP to form Ala-AMP and then transferred to the acceptor end of tRNA(Ala). Also edits incorrectly charged Ser-tRNA(Ala) and Gly-tRNA(Ala) via its editing domain. The sequence is that of Alanine--tRNA ligase from Korarchaeum cryptofilum (strain OPF8).